A 342-amino-acid polypeptide reads, in one-letter code: Endoplasmic reticulum junction formation protein lunapark-1 (342 aa).

Residues 1 to 39 (MGNLFSRNKSPATELERVALSIDDLKKRLQTISSSNTNT) lie on the Cytoplasmic side of the membrane. A coiled-coil region spans residues 13-34 (TELERVALSIDDLKKRLQTISS). The helical transmembrane segment at 40–60 (LYYYYMSIVVILSIAMAHTWL) threads the bilayer. Topologically, residues 61–68 (RFEDPQKT) are lumenal. Residues 69–89 (YVACALMLGAIGIVLAGRYVI) form a helical membrane-spanning segment. Over 90–342 (NGFFSWRTNR…ESKTMETEFH (253 aa)) the chain is Cytoplasmic. Residues 102–136 (QKLENAISQKTTLLDLVKETLKFKEAKEILDRYEK) are a coiled coil. Residues 161 to 191 (ADSSMFATPKQEQKRVETPTAQGPNSAMNSM) form a disordered region. The span at 179 to 191 (PTAQGPNSAMNSM) shows a compositional bias: polar residues. The segment at 236 to 261 (CSICHTHNGMSTPAEYPYISFRCFEC) adopts a C4-type; plays a role in ER morphology zinc-finger fold. Positions 278–342 (RPPMGPKGIQ…ESKTMETEFH (65 aa)) are disordered. The span at 295 to 321 (SENTHNMMENQKPSTDLTPSASQNGSE) shows a compositional bias: polar residues. A compositionally biased stretch (basic and acidic residues) spans 322–342 (KGSDSENEKVPESKTMETEFH).

It belongs to the lunapark family. Expressed in cell bodies along the ventral cord around the pharynx and the tail both in larvae and adults. Also expressed in muscles and hypodermal cells.

The protein resides in the endoplasmic reticulum membrane. Functionally, plays a role in tubular endoplasmic reticulum network formation and maintenance. May be involved in central nervous system development. Has a presynaptic role in neurotransmission. Likely to operate in synaptogenesis by regulating vesicular transport or localization. Required for correct localization of rab-3 and snb-1. The sequence is that of Endoplasmic reticulum junction formation protein lunapark-1 (lnp-1) from Caenorhabditis elegans.